A 782-amino-acid chain; its full sequence is Cadherin-5 (782 aa).

The signal sequence occupies residues 1 to 22 (MQVLVMLLAAAGTYLGLLTAPT). The propeptide occupies 23–44 (AASNPGRQDTPSTLPLHRRQKR). Cadherin domains are found at residues 45–148 (DWIW…WPVF), 149–255 (TQLV…FPVF), 256–370 (TQTR…PPNF), 371–475 (KQPF…DNAP), and 476–592 (EFAK…MGAQ). Residues 45 to 598 (DWIWNQMHID…MGAQVGVSIQ (554 aa)) are Extracellular-facing. Glu55 and Glu56 together coordinate Ca(2+). A glycan (N-linked (GlcNAc...) asparagine) is linked at Asn58. Positions 106, 108, 140, 141, 142, 143, and 144 each coordinate Ca(2+). Residue Asn154 is glycosylated (N-linked (GlcNAc...) asparagine). Asp174, Asp176, His183, and Asp228 together coordinate Ca(2+). Asn360, Asn440, Asn522, and Asn534 each carry an N-linked (GlcNAc...) asparagine glycan. A helical membrane pass occupies residues 599-619 (ALVAIFLCILTIAVISLLVYL). The tract at residues 620 to 659 (RRRLRKQARAHGKSVPEIHEQLVTYDEEGGGEMDTTSYDV) is required for interaction with PALS1. At 620–782 (RRRLRKQARA…GSDPREELLY (163 aa)) the chain is on the cytoplasmic side.

Part of a complex composed of AMOTL2, MAGI1 and CDH5, within the complex AMOTL2 acts as a scaffold protein for the interaction of MAGI1 with CDH5. The complex is required for coupling actin fibers to cell junctions in endothelial cells. Within the complex AMOTL2 (via its N-terminus) interacts with CDH5. Interacts (via cadherin 5 domain) with PTPRB. Interacts with TRPC4. Interacts with KRIT1. Interacts with PARD3. Interacts with RTN4 (isoform B). Interacts with PALS1; the interaction promotes PALS1 localization to cell junctions and is required for CDH5-mediated vascular lumen formation and endothelial cell. Interacts with CTNND1/p120-catenin; the interaction controls CADH5 endocytosis. Phosphorylated on tyrosine residues by KDR/VEGFR-2. Dephosphorylated by PTPRB. In terms of processing, O-glycosylated.

The protein resides in the cell junction. It localises to the adherens junction. It is found in the cell membrane. Its subcellular location is the cytoplasm. Functionally, cadherins are calcium-dependent cell adhesion proteins. They preferentially interact with themselves in a homophilic manner in connecting cells; cadherins may thus contribute to the sorting of heterogeneous cell types. This cadherin may play a important role in endothelial cell biology through control of the cohesion and organization of the intercellular junctions. It associates with alpha-catenin forming a link to the cytoskeleton. Plays a role in coupling actin fibers to cell junctions in endothelial cells, via acting as a cell junctional complex anchor for AMOTL2 and MAGI1. Acts in concert with KRIT1 and PALS1 to establish and maintain correct endothelial cell polarity and vascular lumen. These effects are mediated by recruitment and activation of the Par polarity complex and RAP1B. Required for activation of PRKCZ and for localization of phosphorylated PRKCZ, PARD3, TIAM1 and RAP1B to the cell junction. Associates with CTNND1/p120-catenin to control CADH5 endocytosis. The sequence is that of Cadherin-5 from Sus scrofa (Pig).